The chain runs to 129 residues: Translation initiation factor 5A (129 aa).

Residue Lys-36 is modified to Hypusine.

This sequence belongs to the eIF-5A family.

The protein localises to the cytoplasm. Functions by promoting the formation of the first peptide bond. The chain is Translation initiation factor 5A (eIF5A) from Methanobrevibacter smithii (strain ATCC 35061 / DSM 861 / OCM 144 / PS).